Reading from the N-terminus, the 428-residue chain is MAKIVDIKGREVLDSRGNPTVEADVVLDNGIVGSACAPSGASTGSREALELRDGDKSRYMGKGVLKAVANINGPIRDLLLGKDPVDQKALDHAMIKLDGTENKASLGANAILAVSLAAAKAAAQDQDLPLYAHIANLNGTPGVYSMPVPMMNIINGGEHADNNIDIQEFMIQPVGAKTFAEGLRWGTEIFHHLKAVLKARGLNTAVGDEGGFAPNLASNKEALDAIAEAVANAGYTLGTDVTLALDCAASEFYKNGKYKLSEEGEYSSAEFAEYLAELTRKHPIISIEDGLDESDWDGWKVLTDKIGEKVQLVGDDLFVTNTKILKEGIDKKIANSILIKFNQIGSLTETLEAIQMAKAAGYTAIISHRSGETEDSTIADLAVGTSAGQIKTGSLCRSDRVSKYNQLLRIEEQLGSKAAYRGRAEFRG.

A (2R)-2-phosphoglycerate-binding site is contributed by Q167. The active-site Proton donor is E209. Mg(2+) contacts are provided by D246, E288, and D315. Residues K340, R369, S370, and K391 each coordinate (2R)-2-phosphoglycerate. The active-site Proton acceptor is K340.

The protein belongs to the enolase family. As to quaternary structure, component of the RNA degradosome, a multiprotein complex involved in RNA processing and mRNA degradation. Requires Mg(2+) as cofactor.

The protein resides in the cytoplasm. It is found in the secreted. It localises to the cell surface. It carries out the reaction (2R)-2-phosphoglycerate = phosphoenolpyruvate + H2O. The protein operates within carbohydrate degradation; glycolysis; pyruvate from D-glyceraldehyde 3-phosphate: step 4/5. Its function is as follows. Catalyzes the reversible conversion of 2-phosphoglycerate (2-PG) into phosphoenolpyruvate (PEP). It is essential for the degradation of carbohydrates via glycolysis. The protein is Enolase of Pseudomonas savastanoi pv. phaseolicola (strain 1448A / Race 6) (Pseudomonas syringae pv. phaseolicola (strain 1448A / Race 6)).